The sequence spans 192 residues: Acetyltransferase PA3944 (192 aa).

In terms of domain architecture, N-acetyltransferase spans L18–A187. CoA is bound by residues W105–L107, G113, N145, and G150–M152.

In terms of biological role, catalyzes the transfer of an acetyl group from acetyl coenzyme A (AcCoA) to an acceptor substrate and releases both CoA and the acetylated product. It prefers the peptide Asp-Phe methyl ester (or aspartame) and the peptide antibiotics polymyxin B and colistin. Other substrates like dopamine, serotonin, puromycin, chloramphenicol, D-glucosamine, glycine and N-alpha-acetyl-L-glutamine are used and displayed lower activity. The protein is Acetyltransferase PA3944 of Pseudomonas aeruginosa (strain ATCC 15692 / DSM 22644 / CIP 104116 / JCM 14847 / LMG 12228 / 1C / PRS 101 / PAO1).